The following is a 192-amino-acid chain: Glycerol-3-phosphate acyltransferase (192 aa).

5 consecutive transmembrane segments (helical) span residues 5–25 (VVLILSYILGSIPFSLIITRI), 50–70 (FLAALALFLDSFKGFIAVYIA), 78–98 (DFYIYVSAILAVLGHMFPIWL), 112–132 (ILIAFNIDITLVFVIIWIIVF), and 153–173 (SFFFQRNLFLTLLIIGALVFL).

It belongs to the PlsY family. Probably interacts with PlsX.

The protein resides in the cell membrane. The enzyme catalyses an acyl phosphate + sn-glycerol 3-phosphate = a 1-acyl-sn-glycero-3-phosphate + phosphate. Its pathway is lipid metabolism; phospholipid metabolism. Catalyzes the transfer of an acyl group from acyl-phosphate (acyl-PO(4)) to glycerol-3-phosphate (G3P) to form lysophosphatidic acid (LPA). This enzyme utilizes acyl-phosphate as fatty acyl donor, but not acyl-CoA or acyl-ACP. The polypeptide is Glycerol-3-phosphate acyltransferase (Wolbachia pipientis wMel).